Reading from the N-terminus, the 227-residue chain is Ribosomal RNA large subunit methyltransferase E (227 aa).

S-adenosyl-L-methionine is bound by residues G78, W80, D103, D119, and D143. The active-site Proton acceptor is the K183.

The protein belongs to the class I-like SAM-binding methyltransferase superfamily. RNA methyltransferase RlmE family.

The protein localises to the cytoplasm. The catalysed reaction is uridine(2552) in 23S rRNA + S-adenosyl-L-methionine = 2'-O-methyluridine(2552) in 23S rRNA + S-adenosyl-L-homocysteine + H(+). Functionally, specifically methylates the uridine in position 2552 of 23S rRNA at the 2'-O position of the ribose in the fully assembled 50S ribosomal subunit. The sequence is that of Ribosomal RNA large subunit methyltransferase E from Rickettsia africae (strain ESF-5).